Consider the following 400-residue polypeptide: Large envelope protein (400 aa).

Met-1 carries the post-translational modification N-acetylmethionine. Gly-2 carries the N-myristoyl glycine; by host lipid modification. The interval Gly-2–Ala-119 is pre-S1. The pre-S stretch occupies residues Gly-2–Asn-174. Residues Gly-2–Gly-181 lie on the Virion surface; in external conformation side of the membrane. The Intravirion; in internal conformation segment spans residues Gly-2–Arg-253. An N-linked (GlcNAc...) asparagine glycan is attached at Pro-4. A disordered region spans residues Val-84–Pro-110. Over residues Ser-96–Ser-109 the composition is skewed to polar residues. Residues Met-120 to Asn-174 form a pre-S2 region. Residues Leu-182 to Ile-202 form a helical membrane-spanning segment. Over Pro-203–Arg-253 the chain is Intravirion; in external conformation. The chain crosses the membrane as a helical span at residues Phe-254–Tyr-274. Topologically, residues Gln-275–Ser-348 are virion surface. Residue Asn-320 is glycosylated (N-linked (GlcNAc...) asparagine; by host). The helical transmembrane segment at Leu-349–Ile-369 threads the bilayer. At Trp-370–Trp-375 the chain is on the intravirion side. The chain crosses the membrane as a helical span at residues Gly-376 to Val-398. Topologically, residues Ser-399–Ile-400 are virion surface.

It belongs to the orthohepadnavirus major surface antigen family. In terms of assembly, in its internal form (Li-HBsAg), interacts with the capsid protein and with the isoform S. Interacts with host chaperone CANX. As to quaternary structure, associates with host chaperone CANX through its pre-S2 N glycan; this association may be essential for isoform M proper secretion. Interacts with isoform L. Interacts with the antigens of satellite virus HDV (HDVAgs); this interaction is required for encapsidation of HDV genomic RNA. Post-translationally, isoform M is N-terminally acetylated by host at a ratio of 90%, and N-glycosylated by host at the pre-S2 region. In terms of processing, myristoylated.

The protein resides in the virion membrane. In terms of biological role, the large envelope protein exists in two topological conformations, one which is termed 'external' or Le-HBsAg and the other 'internal' or Li-HBsAg. In its external conformation the protein attaches the virus to cell receptors and thereby initiating infection. This interaction determines the species specificity and liver tropism. This attachment induces virion internalization predominantly through caveolin-mediated endocytosis. The large envelope protein also assures fusion between virion membrane and endosomal membrane. In its internal conformation the protein plays a role in virion morphogenesis and mediates the contact with the nucleocapsid like a matrix protein. Functionally, the middle envelope protein plays an important role in the budding of the virion. It is involved in the induction of budding in a nucleocapsid independent way. In this process the majority of envelope proteins bud to form subviral lipoprotein particles of 22 nm of diameter that do not contain a nucleocapsid. This Homo sapiens (Human) protein is Large envelope protein.